The primary structure comprises 239 residues: Ribonuclease P protein component 3 (239 aa).

Belongs to the eukaryotic/archaeal RNase P protein component 3 family. Consists of a catalytic RNA component and at least 4-5 protein subunits.

It localises to the cytoplasm. The catalysed reaction is Endonucleolytic cleavage of RNA, removing 5'-extranucleotides from tRNA precursor.. Part of ribonuclease P, a protein complex that generates mature tRNA molecules by cleaving their 5'-ends. The protein is Ribonuclease P protein component 3 of Methanosarcina barkeri (strain Fusaro / DSM 804).